Reading from the N-terminus, the 257-residue chain is tRNA (guanine-N(7)-)-methyltransferase (257 aa).

Residues 1-42 (MTVVVSDHQNPRPPGDDAAPLGRTGNRDRPPGSFFGRRKGHR) are disordered. S-adenosyl-L-methionine-binding residues include Glu84, Glu109, Asp136, and Asp158. Residue Asp158 is part of the active site. Substrate contacts are provided by Lys162 and Asp194.

Belongs to the class I-like SAM-binding methyltransferase superfamily. TrmB family.

The enzyme catalyses guanosine(46) in tRNA + S-adenosyl-L-methionine = N(7)-methylguanosine(46) in tRNA + S-adenosyl-L-homocysteine. Its pathway is tRNA modification; N(7)-methylguanine-tRNA biosynthesis. Its function is as follows. Catalyzes the formation of N(7)-methylguanine at position 46 (m7G46) in tRNA. In Nitrobacter winogradskyi (strain ATCC 25391 / DSM 10237 / CIP 104748 / NCIMB 11846 / Nb-255), this protein is tRNA (guanine-N(7)-)-methyltransferase.